A 208-amino-acid polypeptide reads, in one-letter code: Methyl-CpG-binding domain protein 3-like 2 (208 aa).

Residues 1–89 (MGEPAFTSFP…HLEKPQQLCA (89 aa)) form an interacts with MBD3 region.

It belongs to the MBD3L family. Interacts (via N-terminus) with MBD3; the interaction is direct. Interacts with MTA1. Interacts with HDAC1. Interacts with HDAC2. Interacts with RBBP4. Interacts with RBBP7. Detected at low levels in several somatic tissues. Highly expressed in the ovarian teratocarcinoma cell line PA-1.

It localises to the nucleus. May displace the NuRD complex from chromatin. This is Methyl-CpG-binding domain protein 3-like 2 (MBD3L2) from Homo sapiens (Human).